The following is a 165-amino-acid chain: Austinoid biosynthesis cluster protein J (165 aa).

Belongs to the trt14 isomerase family. As to quaternary structure, homodimer.

Its pathway is secondary metabolite biosynthesis; terpenoid biosynthesis. Functionally, part of the gene cluster that mediates the biosynthesis of calidodehydroaustin, a fungal meroterpenoid. The first step of the pathway is the synthesis of 3,5-dimethylorsellinic acid by the polyketide synthase ausA. 3,5-dimethylorsellinic acid is then prenylated by the polyprenyl transferase ausN. Further epoxidation by the FAD-dependent monooxygenase ausM and cyclization by the probable terpene cyclase ausL lead to the formation of protoaustinoid A. Protoaustinoid A is then oxidized to spiro-lactone preaustinoid A3 by the combined action of the FAD-binding monooxygenases ausB and ausC, and the dioxygenase ausE. Acid-catalyzed keto-rearrangement and ring contraction of the tetraketide portion of preaustinoid A3 by ausJ lead to the formation of preaustinoid A4. The aldo-keto reductase ausK, with the help of ausH, is involved in the next step by transforming preaustinoid A4 into isoaustinone which is in turn hydroxylated by the P450 monooxygenase ausI to form austinolide. The cytochrome P450 monooxygenase ausG modifies austinolide to austinol. Austinol is further acetylated to austin by the O-acetyltransferase ausP, which spontaneously changes to dehydroaustin. The cytochrome P450 monooxygenase ausR then converts dehydroaustin is into 7-dehydrodehydroaustin. The hydroxylation catalyzed by ausR permits the O-acetyltransferase ausQ to add an additional acetyl group to the molecule, leading to the formation of acetoxydehydroaustin. The short chain dehydrogenase ausT catalyzes the reduction of the double bond present between carbon atoms 1 and 2 to convert 7-dehydrodehydroaustin into 1,2-dihydro-7-hydroxydehydroaustin. AusQ catalyzes not only an acetylation reaction but also the addition of the PKS ausV diketide product to 1,2-dihydro-7-hydroxydehydroaustin, forming precalidodehydroaustin. Finally, the iron/alpha-ketoglutarate-dependent dioxygenase converts precalidodehydroaustin into calidodehydroaustin. This Aspergillus calidoustus protein is Austinoid biosynthesis cluster protein J.